A 211-amino-acid polypeptide reads, in one-letter code: Phosphoribosyl-dephospho-CoA transferase (211 aa).

Catalysis depends on residues aspartate 136 and aspartate 138.

This sequence belongs to the MdcG family.

The catalysed reaction is apo-[malonate decarboxylase ACP] + 2'-(5''-triphospho-alpha-D-ribosyl)-3'-dephospho-CoA = holo-[malonate decarboxylase ACP] + diphosphate. Its function is as follows. Transfers 2'-(5-triphosphoribosyl)-3'-dephosphocoenzyme-A to the apo-[acyl-carrier-protein] of the malonate decarboxylase to yield holo-[acyl-carrier-protein]. This chain is Phosphoribosyl-dephospho-CoA transferase, found in Pseudomonas syringae pv. tomato (strain ATCC BAA-871 / DC3000).